A 225-amino-acid chain; its full sequence is Elongation factor 1-beta (225 aa).

Residues 2–84 (GFGDLKSPAG…ALGKYGPADV (83 aa)) form the GST C-terminal domain. Lys7 carries the post-translational modification N6-acetyllysine. Phosphoserine occurs at positions 8 and 42. The interval 78–115 (KYGPADVEDTTGSGATDSKDDDDIDLFGSDDEEESEEA) is disordered. Thr88 and Thr93 each carry phosphothreonine. Residues Ser95 and Ser106 each carry the phosphoserine modification. Positions 96-113 (KDDDDIDLFGSDDEEESE) are enriched in acidic residues. Lys147 participates in a covalent cross-link: Glycyl lysine isopeptide (Lys-Gly) (interchain with G-Cter in SUMO2). At Ser174 the chain carries Phosphoserine.

The protein belongs to the EF-1-beta/EF-1-delta family. In terms of assembly, EF-1 is composed of 4 subunits: alpha, beta (alpha subunit of the eEF1B subcomplex), delta (beta subunit of the eEF1B subcomplex), and gamma (gamma subunit of the eEF1B subcomplex). Interacts with elongation factor EEF1A1. Post-translationally, phosphorylation affects the GDP/GTP exchange rate.

In terms of biological role, catalytic subunit of the guanine nucleotide exchange factor (GEF) (eEF1B subcomplex) of the eukaryotic elongation factor 1 complex (eEF1). Stimulates the exchange of GDP for GTP on elongation factor 1A (eEF1A), probably by displacing GDP from the nucleotide binding pocket in eEF1A. In Homo sapiens (Human), this protein is Elongation factor 1-beta (EEF1B2).